Reading from the N-terminus, the 137-residue chain is Cofilin (137 aa).

One can recognise an ADF-H domain in the interval 5-135; that stretch reads GVKVSPECLE…AYETVLEKVT (131 aa).

The protein belongs to the actin-binding proteins ADF family.

It localises to the cytoplasm. It is found in the cytoskeleton. The protein localises to the nucleus matrix. In terms of biological role, controls reversibly actin polymerization and depolymerization in a pH-sensitive manner. It has the ability to bind G- and F-actin in a 1:1 ratio of cofilin to actin. Binding to F-actin is regulated by tropomyosin. It is the major component of intranuclear and cytoplasmic actin rods. Required for accumulation of actin at the cell division site via depolymerizing actin at the cell ends. In association with myosin II has a role in the assembly of the contractile ring via severing actin filaments. Involved in the maintenance of the contractile ring once formed. In association with profilin and capping protein, has a role in the mitotic reorganization of the actin cytoskeleton. Severs actin filaments (F-actin). The protein is Cofilin (cof1) of Schizosaccharomyces pombe (strain 972 / ATCC 24843) (Fission yeast).